The sequence spans 347 residues: NADH-ubiquinone oxidoreductase chain 2 (347 aa).

The next 9 membrane-spanning stretches (helical) occupy residues 5–22 (ILAIVMSTVISGTIMVLI), 26–45 (WLTIWIGFEMNMLAIIPILM), 60–80 (FLTQATASMLLMLGIIINLLL), 150–170 (NPNLLMAMAIMSVLVGGWGGL), 178–198 (ILAYSSIAHMGWMIAVTTYNP), 200–220 (LMLLNLTIYITMTLGTFMLFM), 237–257 (LPLIASLILMTMLSLGGLPPL), 274–294 (DMAIMATFMAMTALLNLYFYM), and 327–347 (PPLIMISTMLLPLTPMVLTLF).

Belongs to the complex I subunit 2 family. Core subunit of respiratory chain NADH dehydrogenase (Complex I) which is composed of 45 different subunits. Interacts with TMEM242.

The protein resides in the mitochondrion inner membrane. It carries out the reaction a ubiquinone + NADH + 5 H(+)(in) = a ubiquinol + NAD(+) + 4 H(+)(out). Core subunit of the mitochondrial membrane respiratory chain NADH dehydrogenase (Complex I) which catalyzes electron transfer from NADH through the respiratory chain, using ubiquinone as an electron acceptor. Essential for the catalytic activity and assembly of complex I. This is NADH-ubiquinone oxidoreductase chain 2 from Martes zibellina (Sable).